A 177-amino-acid polypeptide reads, in one-letter code: Large ribosomal subunit protein uL16m (177 aa).

The protein belongs to the universal ribosomal protein uL16 family.

Its subcellular location is the mitochondrion. In Brassica napus (Rape), this protein is Large ribosomal subunit protein uL16m (RPL16).